A 499-amino-acid chain; its full sequence is Guanosine-5'-triphosphate,3'-diphosphate pyrophosphatase (499 aa).

It belongs to the GppA/Ppx family. GppA subfamily.

The enzyme catalyses guanosine 3'-diphosphate 5'-triphosphate + H2O = guanosine 3',5'-bis(diphosphate) + phosphate + H(+). The protein operates within purine metabolism; ppGpp biosynthesis; ppGpp from GTP: step 2/2. Catalyzes the conversion of pppGpp to ppGpp. Guanosine pentaphosphate (pppGpp) is a cytoplasmic signaling molecule which together with ppGpp controls the 'stringent response', an adaptive process that allows bacteria to respond to amino acid starvation, resulting in the coordinated regulation of numerous cellular activities. The chain is Guanosine-5'-triphosphate,3'-diphosphate pyrophosphatase from Sodalis glossinidius (strain morsitans).